A 121-amino-acid polypeptide reads, in one-letter code: Large ribosomal subunit protein uL18 (121 aa).

This sequence belongs to the universal ribosomal protein uL18 family. Part of the 50S ribosomal subunit; part of the 5S rRNA/L5/L18/L25 subcomplex. Contacts the 5S and 23S rRNAs.

In terms of biological role, this is one of the proteins that bind and probably mediate the attachment of the 5S RNA into the large ribosomal subunit, where it forms part of the central protuberance. The sequence is that of Large ribosomal subunit protein uL18 from Anaplasma phagocytophilum (strain HZ).